The following is a 279-amino-acid chain: Phosphatidylglycerol--prolipoprotein diacylglyceryl transferase (279 aa).

The next 3 helical transmembrane spans lie at 18–38 (LSVR…YFVA), 55–75 (IIFY…VIFQ), and 89–109 (IWHG…AGVI). Position 137 (Arg-137) interacts with a 1,2-diacyl-sn-glycero-3-phospho-(1'-sn-glycerol). Transmembrane regions (helical) follow at residues 203 to 223 (LGET…FIEG) and 235 to 255 (IRVA…LIVY).

The protein belongs to the Lgt family.

The protein resides in the cell membrane. It catalyses the reaction L-cysteinyl-[prolipoprotein] + a 1,2-diacyl-sn-glycero-3-phospho-(1'-sn-glycerol) = an S-1,2-diacyl-sn-glyceryl-L-cysteinyl-[prolipoprotein] + sn-glycerol 1-phosphate + H(+). It participates in protein modification; lipoprotein biosynthesis (diacylglyceryl transfer). In terms of biological role, catalyzes the transfer of the diacylglyceryl group from phosphatidylglycerol to the sulfhydryl group of the N-terminal cysteine of a prolipoprotein, the first step in the formation of mature lipoproteins. In Staphylococcus aureus (strain USA300), this protein is Phosphatidylglycerol--prolipoprotein diacylglyceryl transferase.